Reading from the N-terminus, the 369-residue chain is Peptide chain release factor 2 (369 aa).

Gln-250 is modified (N5-methylglutamine).

The protein belongs to the prokaryotic/mitochondrial release factor family. Methylated by PrmC. Methylation increases the termination efficiency of RF2.

It is found in the cytoplasm. In terms of biological role, peptide chain release factor 2 directs the termination of translation in response to the peptide chain termination codons UGA and UAA. The chain is Peptide chain release factor 2 (prfB) from Rickettsia prowazekii (strain Madrid E).